The chain runs to 119 residues: Large ribosomal subunit protein bL20 (119 aa).

This sequence belongs to the bacterial ribosomal protein bL20 family.

Functionally, binds directly to 23S ribosomal RNA and is necessary for the in vitro assembly process of the 50S ribosomal subunit. It is not involved in the protein synthesizing functions of that subunit. In Clostridium botulinum (strain Alaska E43 / Type E3), this protein is Large ribosomal subunit protein bL20.